We begin with the raw amino-acid sequence, 225 residues long: Leucyl/phenylalanyl-tRNA--protein transferase (225 aa).

The protein belongs to the L/F-transferase family.

It localises to the cytoplasm. It carries out the reaction N-terminal L-lysyl-[protein] + L-leucyl-tRNA(Leu) = N-terminal L-leucyl-L-lysyl-[protein] + tRNA(Leu) + H(+). The catalysed reaction is N-terminal L-arginyl-[protein] + L-leucyl-tRNA(Leu) = N-terminal L-leucyl-L-arginyl-[protein] + tRNA(Leu) + H(+). It catalyses the reaction L-phenylalanyl-tRNA(Phe) + an N-terminal L-alpha-aminoacyl-[protein] = an N-terminal L-phenylalanyl-L-alpha-aminoacyl-[protein] + tRNA(Phe). Its function is as follows. Functions in the N-end rule pathway of protein degradation where it conjugates Leu, Phe and, less efficiently, Met from aminoacyl-tRNAs to the N-termini of proteins containing an N-terminal arginine or lysine. The chain is Leucyl/phenylalanyl-tRNA--protein transferase from Nitrobacter hamburgensis (strain DSM 10229 / NCIMB 13809 / X14).